The primary structure comprises 353 residues: Histidine biosynthesis bifunctional protein HisB (353 aa).

The segment at 1–164 (MKNKILFIDR…HITKYIIKHN (164 aa)) is histidinol-phosphatase. The active-site Nucleophile is Asp9. Positions 9 and 11 each coordinate Mg(2+). The active-site Proton donor is the Asp11. Zn(2+) contacts are provided by Cys93, His95, Cys101, and Cys103. A Mg(2+)-binding site is contributed by Asp128. Positions 165 to 353 (RYAEIIRRTK…NMLPTSKGIL (189 aa)) are imidazoleglycerol-phosphate dehydratase.

In the N-terminal section; belongs to the histidinol-phosphatase family. This sequence in the C-terminal section; belongs to the imidazoleglycerol-phosphate dehydratase family. Mg(2+) is required as a cofactor. The cofactor is Zn(2+).

The protein resides in the cytoplasm. The enzyme catalyses D-erythro-1-(imidazol-4-yl)glycerol 3-phosphate = 3-(imidazol-4-yl)-2-oxopropyl phosphate + H2O. It catalyses the reaction L-histidinol phosphate + H2O = L-histidinol + phosphate. It functions in the pathway amino-acid biosynthesis; L-histidine biosynthesis; L-histidine from 5-phospho-alpha-D-ribose 1-diphosphate: step 6/9. Its pathway is amino-acid biosynthesis; L-histidine biosynthesis; L-histidine from 5-phospho-alpha-D-ribose 1-diphosphate: step 8/9. The polypeptide is Histidine biosynthesis bifunctional protein HisB (Buchnera aphidicola subsp. Acyrthosiphon pisum (strain Tuc7)).